We begin with the raw amino-acid sequence, 543 residues long: MKQTKYIFVTGGVLSSLGKGIAAASIATLLKNSGLKASILKADPYINVDPGTMSPFEHGEVFVTDDGAETDLDLGHYERFLDESLSQDNNFTTGRVYQSVIEKERRGEYLGKTIQVIPHIVGEIKDRIKKAGEGKDILIVEIGGTVGDIEGLPFLEAIRALRLEVGKNNAMNIHLTLVPFIKAAGELKTKPTQHSVGELRRIGISPDMIICRSEKALDRDLKDKIAISCGVEKNCVIESVDAASIYQIPLNFLKQDILNPIAEILDLKNLKPNMENWDSLVKRVIAPSNEVKIAFVGKYVDLKESYKSLTEAIIHAGAALDTKVELKWVDSEKLENMESAEVFKDVSGILVAGGFGYRGVEGKIKAIQYARENKIPFLGICLGMQLALVEFARNVLKLKDANSSEFDEKCENPVVYLIDEFMDTNGEKQIRTAKTPLGGTMRLGAYKCDIKEKSLLAKVYNEAKSVKERHRHRYEANPKYRVDFEKHGLIVSGESKGLIEAVELNCHPFFLAVQFHPEFTSRLEHVNPVICGFIKAAINYEDN.

The interval 1–267 is amidoligase domain; it reads MKQTKYIFVT…LNPIAEILDL (267 aa). Ser15 serves as a coordination point for CTP. Ser15 provides a ligand contact to UTP. ATP-binding positions include 16 to 21 and Asp73; that span reads SLGKGI. Residues Asp73 and Glu141 each contribute to the Mg(2+) site. CTP is bound by residues 148–150, 188–193, and Lys224; these read DIE and KTKPTQ. Residues 188–193 and Lys224 each bind UTP; that span reads KTKPTQ. Positions 292 to 543 constitute a Glutamine amidotransferase type-1 domain; the sequence is KIAFVGKYVD…IKAAINYEDN (252 aa). Gly354 is an L-glutamine binding site. Cys381 functions as the Nucleophile; for glutamine hydrolysis in the catalytic mechanism. L-glutamine is bound by residues 382–385, Glu405, and Arg473; that span reads LGMQ. Active-site residues include His516 and Glu518.

It belongs to the CTP synthase family. Homotetramer.

The catalysed reaction is UTP + L-glutamine + ATP + H2O = CTP + L-glutamate + ADP + phosphate + 2 H(+). The enzyme catalyses L-glutamine + H2O = L-glutamate + NH4(+). It carries out the reaction UTP + NH4(+) + ATP = CTP + ADP + phosphate + 2 H(+). It participates in pyrimidine metabolism; CTP biosynthesis via de novo pathway; CTP from UDP: step 2/2. Allosterically activated by GTP, when glutamine is the substrate; GTP has no effect on the reaction when ammonia is the substrate. The allosteric effector GTP functions by stabilizing the protein conformation that binds the tetrahedral intermediate(s) formed during glutamine hydrolysis. Inhibited by the product CTP, via allosteric rather than competitive inhibition. Functionally, catalyzes the ATP-dependent amination of UTP to CTP with either L-glutamine or ammonia as the source of nitrogen. Regulates intracellular CTP levels through interactions with the four ribonucleotide triphosphates. This is CTP synthase from Campylobacter jejuni subsp. doylei (strain ATCC BAA-1458 / RM4099 / 269.97).